Reading from the N-terminus, the 212-residue chain is Prolactin (212 aa).

The N-terminal stretch at methionine 1–alanine 24 is a signal peptide. 2 disulfide bridges follow: cysteine 70–cysteine 185 and cysteine 202–cysteine 212.

The protein belongs to the somatotropin/prolactin family. In terms of tissue distribution, pituitary gland.

It localises to the secreted. This Dicentrarchus labrax (European seabass) protein is Prolactin (prl).